The following is a 558-amino-acid chain: Nuclear speckle splicing regulatory protein 1 (558 aa).

Residues 21 to 54 (PVLQKPSVFGNDSDDDDETSVSESLQREAAKKQA) form a disordered region. Phosphoserine occurs at positions 27 and 33. Residues 104-170 (IHNLLKAVEI…REKRAAALEA (67 aa)) are a coiled coil. Positions 106–170 (NLLKAVEIRK…REKRAAALEA (65 aa)) are necessary for alternative splicing activity. Residues Lys-199 and Lys-210 each participate in a glycyl lysine isopeptide (Lys-Gly) (interchain with G-Cter in SUMO2) cross-link. Positions 204 to 215 (EARSGIKEEKSR) are enriched in basic and acidic residues. A disordered region spans residues 204 to 534 (EARSGIKEEK…KRNNEETVMS (331 aa)). Residues 216–226 (GFSNEVSSKNR) are compositionally biased toward polar residues. Ser-248, Ser-254, and Ser-255 each carry phosphoserine. Basic and acidic residues predominate over residues 250 to 280 (FDAKSSADDEIEETRVNCRREKVIETPENDF). Thr-275 is subject to Phosphothreonine. Lys-281 is covalently cross-linked (Glycyl lysine isopeptide (Lys-Gly) (interchain with G-Cter in SUMO2)). Positions 299–310 (STRHHTKGSRTS) are enriched in basic residues. Basic and acidic residues-rich tracts occupy residues 311–442 (RGHE…KREV), 449–487 (RNQD…RNQE), and 501–517 (RLTE…ERPP). Residues 379–427 (KREKDREKYSQREQERDRQQNDQNRPSEKGEKEEKSKAKEEHMKVRKER) are a coiled coil. The residue at position 457 (Ser-457) is a Phosphoserine.

It belongs to the NSRP1 family. Interacts (via C-terminus) with SRSF1. Interacts (via C-terminus) with SRSF2. Expressed in dendritic cells, T-cells, B-cells and natural killer cells. Expressed in secondary lymphoid organs such as spleen and mesenteric, axillary and brachial lymph nodes.

Its subcellular location is the nucleus. The protein resides in the nucleus speckle. Functionally, RNA-binding protein that mediates pre-mRNA alternative splicing regulation. This Homo sapiens (Human) protein is Nuclear speckle splicing regulatory protein 1 (NSRP1).